The sequence spans 317 residues: Protein phosphatase PTC7 homolog fig (317 aa).

The region spanning 46–312 (PYLVTVVQGR…DDITLILASV (267 aa)) is the PPM-type phosphatase domain. 3 residues coordinate Mn(2+): D90, G91, and D235.

This sequence belongs to the PP2C family. Mg(2+) is required as a cofactor. Requires Mn(2+) as cofactor.

The enzyme catalyses O-phospho-L-seryl-[protein] + H2O = L-seryl-[protein] + phosphate. It catalyses the reaction O-phospho-L-threonyl-[protein] + H2O = L-threonyl-[protein] + phosphate. The sequence is that of Protein phosphatase PTC7 homolog fig from Drosophila erecta (Fruit fly).